The primary structure comprises 103 residues: Large ribosomal subunit protein bL21 (103 aa).

Belongs to the bacterial ribosomal protein bL21 family. In terms of assembly, part of the 50S ribosomal subunit. Contacts protein L20.

Its function is as follows. This protein binds to 23S rRNA in the presence of protein L20. The protein is Large ribosomal subunit protein bL21 of Treponema denticola (strain ATCC 35405 / DSM 14222 / CIP 103919 / JCM 8153 / KCTC 15104).